The sequence spans 303 residues: Acetylglutamate kinase (303 aa).

Residues 69–70 (GG), Arg-91, and Asn-190 contribute to the substrate site.

It belongs to the acetylglutamate kinase family. ArgB subfamily.

It is found in the cytoplasm. The enzyme catalyses N-acetyl-L-glutamate + ATP = N-acetyl-L-glutamyl 5-phosphate + ADP. It participates in amino-acid biosynthesis; L-arginine biosynthesis; N(2)-acetyl-L-ornithine from L-glutamate: step 2/4. In terms of biological role, catalyzes the ATP-dependent phosphorylation of N-acetyl-L-glutamate. The chain is Acetylglutamate kinase from Nocardia farcinica (strain IFM 10152).